We begin with the raw amino-acid sequence, 187 residues long: Orotate phosphoribosyltransferase (187 aa).

5-phospho-alpha-D-ribose 1-diphosphate is bound by residues Arg-98, Lys-99, Lys-102, His-104, and 128 to 136; that span reads EDVTTTGGS. Positions 132 and 160 each coordinate orotate.

It belongs to the purine/pyrimidine phosphoribosyltransferase family. PyrE subfamily. As to quaternary structure, homodimer. The cofactor is Mg(2+).

The enzyme catalyses orotidine 5'-phosphate + diphosphate = orotate + 5-phospho-alpha-D-ribose 1-diphosphate. It participates in pyrimidine metabolism; UMP biosynthesis via de novo pathway; UMP from orotate: step 1/2. Its function is as follows. Catalyzes the transfer of a ribosyl phosphate group from 5-phosphoribose 1-diphosphate to orotate, leading to the formation of orotidine monophosphate (OMP). This Rhodopseudomonas palustris (strain TIE-1) protein is Orotate phosphoribosyltransferase.